Here is a 270-residue protein sequence, read N- to C-terminus: Diaminopimelate epimerase (270 aa).

Positions 15, 49, and 66 each coordinate substrate. The Proton donor role is filled by C75. Substrate is bound by residues 76–77 (GN), N155, N187, and 204–205 (ER). Catalysis depends on C213, which acts as the Proton acceptor. Position 214–215 (214–215 (GS)) interacts with substrate.

The protein belongs to the diaminopimelate epimerase family. As to quaternary structure, homodimer.

It is found in the cytoplasm. The catalysed reaction is (2S,6S)-2,6-diaminopimelate = meso-2,6-diaminopimelate. The protein operates within amino-acid biosynthesis; L-lysine biosynthesis via DAP pathway; DL-2,6-diaminopimelate from LL-2,6-diaminopimelate: step 1/1. Functionally, catalyzes the stereoinversion of LL-2,6-diaminopimelate (L,L-DAP) to meso-diaminopimelate (meso-DAP), a precursor of L-lysine and an essential component of the bacterial peptidoglycan. This is Diaminopimelate epimerase from Rickettsia felis (strain ATCC VR-1525 / URRWXCal2) (Rickettsia azadi).